The chain runs to 324 residues: Probable 6-phosphogluconolactonase 4, chloroplastic (324 aa).

A chloroplast-targeting transit peptide spans Met-1–Ala-61. A disordered region spans residues Arg-20–His-43. Low complexity predominate over residues Pro-24–Arg-34.

Belongs to the glucosamine/galactosamine-6-phosphate isomerase family. 6-phosphogluconolactonase subfamily.

The protein resides in the plastid. It localises to the chloroplast. It carries out the reaction 6-phospho-D-glucono-1,5-lactone + H2O = 6-phospho-D-gluconate + H(+). It participates in carbohydrate degradation; pentose phosphate pathway; D-ribulose 5-phosphate from D-glucose 6-phosphate (oxidative stage): step 2/3. Its function is as follows. Hydrolysis of 6-phosphogluconolactone to 6-phosphogluconate. The polypeptide is Probable 6-phosphogluconolactonase 4, chloroplastic (Oryza sativa subsp. indica (Rice)).